The primary structure comprises 1107 residues: Voltage-gated delayed rectifier potassium channel KCNH8 (1107 aa).

At 1-225 (MPVMKGLLAP…HFSTFKAGWD (225 aa)) the chain is on the cytoplasmic side. The 73-residue stretch at 18–90 (IATRFDGTHS…LQIEKSLEEK (73 aa)) folds into the PAS domain. The PAC domain maps to 93–145 (FKGEIMFYKKNGSPFWCLLDIVPIKNEKGDVVLFLASFKDITDTKVKITPEDK). The helical transmembrane segment at 226 to 246 (WLILLATFYVAVTVPYNVCFI) threads the bilayer. Residues 247–255 (GNDDLSTTR) are Extracellular-facing. Residues 256–276 (STTVSDIAVEILFIIDIILNF) form a helical membrane-spanning segment. The Cytoplasmic portion of the chain corresponds to 277 to 298 (RTTYVSKSGQVIFEARSICIHY). A helical membrane pass occupies residues 299 to 319 (VTTWFIIDLIAALPFDLLYAF). N-linked (GlcNAc...) asparagine glycosylation occurs at Asn320. Over 320–327 (NVTVVSLV) the chain is Extracellular. Residues 328-348 (HLLKTVRLLRLLRLLQKLDRY) form a helical; Voltage-sensor membrane-spanning segment. The Cytoplasmic segment spans residues 349–357 (SQHSTIVLT). Residues 358-378 (LLMSMFALLAHWMACIWYVIG) traverse the membrane as a helical segment. Residues 379–419 (KMEREDNSLLKWEVGWLHELGKRLESPYYGNNTLGGPSIRS) lie on the Extracellular side of the membrane. An N-linked (GlcNAc...) asparagine glycan is attached at Asn409. The pore-forming intramembrane region spans 420–440 (AYIAALYFTLSSLTSVGFGNV). The Selectivity filter signature appears at 434-439 (SVGFGN). Residues 441 to 448 (SANTDAEK) lie on the Extracellular side of the membrane. A helical transmembrane segment spans residues 449-469 (IFSICTMLIGALMHALVFGNV). Topologically, residues 470–1107 (TAIIQRMYSR…EVKDNKAINV (638 aa)) are cytoplasmic. The segment at 551 to 668 (LFECASRGCL…HKFVEDIQHD (118 aa)) is cNMP-binding domain. Positions 686–702 (SNKSMVSQSEPKGNGNI) are enriched in polar residues. 4 disordered regions span residues 686–742 (SNKS…NKKV), 764–791 (HSPI…KRKE), 818–847 (EDGN…PPLG), and 961–989 (VDPS…YHSP). The segment covering 710–724 (VEDEEEEEEGEEEEA) has biased composition (acidic residues). Positions 961–972 (VDPSSVGSSPQR) are enriched in polar residues.

The protein belongs to the potassium channel family. H (Eag) (TC 1.A.1.20) subfamily. Kv12.1/KCNH8 sub-subfamily. As to quaternary structure, the potassium channel is probably composed of a homo- or heterotetrameric complex of pore-forming alpha subunits that can associate with modulating beta subunits. In terms of tissue distribution, primarily expressed in the nervous system.

It localises to the membrane. The enzyme catalyses K(+)(in) = K(+)(out). Its function is as follows. Pore-forming (alpha) subunit of a voltage-gated delayed rectifier potassium channel that mediates outward-rectifying potassium currents. Elicits a slowly activating, non-inactivating and slowly deactivation outwards potassium current at depolarizating voltages from -30 mV to +50mV. Shows no obvious change in the activation rate from different holding potentials. Activation is strongly dependent on the pH of the external solution. This Homo sapiens (Human) protein is Voltage-gated delayed rectifier potassium channel KCNH8.